Reading from the N-terminus, the 1741-residue chain is Protein wings apart-like (1741 aa).

Disordered regions lie at residues 68–100, 119–277, 291–472, 490–612, 675–810, 823–963, 1038–1068, 1112–1141, and 1708–1741; these read SPSQ…FFKS, CGAG…EVAA, SSTF…KPPK, KAAA…VQED, LAVL…ASVN, KAEA…QRGA, AAGK…STLR, SAAG…RVDR, and TSST…SSHR. Residues 165-174 show a composition bias toward basic residues; the sequence is RKRKSPKKKA. Positions 175–185 are enriched in low complexity; sequence ATTSASTPSTP. Residue Thr-258 is modified to Phosphothreonine. A compositionally biased stretch (low complexity) spans 309-334; sequence APSASASTSSQLPSASGSASNPPSAS. Ser-355 carries the phosphoserine modification. Residues 367–377 show a composition bias toward polar residues; sequence AHQNQLNQLSV. A compositionally biased stretch (low complexity) spans 408–426; the sequence is AADSVDGSSAAVGGASAGD. Acidic residues predominate over residues 438-456; the sequence is PNEDEEEEEEEEDEEEEPP. Positions 503–512 are enriched in basic residues; the sequence is SRSKKHKHKQ. Low complexity-rich tracts occupy residues 515-529 and 553-568; these read AAGS…ATPA and QHTP…LHPQ. Residues 586–604 show a composition bias toward polar residues; sequence SQSSVLGSISSKGNSTPQL. Composition is skewed to low complexity over residues 796–810 and 849–859; these read NAAA…ASVN and QQVTQVLQQEP. Residues 860–873 show a composition bias toward acidic residues; the sequence is VPEEQETPDAEEEQ. Over residues 880–894 the composition is skewed to basic and acidic residues; that stretch reads PHTDHREHSPDHDPD. Ser-888 is modified (phosphoserine). Composition is skewed to low complexity over residues 939–952 and 1047–1065; these read GAAN…AAAA and GDSP…SSAS. Gly residues predominate over residues 1117–1136; that stretch reads SAGGTGATTGGGGATGGGGP. One can recognise a WAPL domain in the interval 1140–1648; the sequence is DRKTKDYYPV…EKYHTFMNLT (509 aa). Residues 1708-1730 are compositionally biased toward low complexity; it reads TSSTTVGSGSAPSSTSATGTTRA.

The protein belongs to the WAPL family.

Its function is as follows. Has a role in female meiotic chromosome segregation in females; proximal heterochromatin is involved in chromosome pairing during female meiosis. Is a dominant suppressor of both white and Stubble position-effect variegation (PEV), while it is a weak enhancer of brown variegation. The polypeptide is Protein wings apart-like (Drosophila melanogaster (Fruit fly)).